Here is a 620-residue protein sequence, read N- to C-terminus: 1-deoxy-D-xylulose-5-phosphate synthase (620 aa).

Residues histidine 80 and 121-123 (GHS) each bind thiamine diphosphate. Residue aspartate 152 participates in Mg(2+) binding. Thiamine diphosphate is bound by residues 153-154 (GA), asparagine 181, tyrosine 288, and glutamate 370. Asparagine 181 contributes to the Mg(2+) binding site.

The protein belongs to the transketolase family. DXPS subfamily. As to quaternary structure, homodimer. The cofactor is Mg(2+). Thiamine diphosphate is required as a cofactor.

The catalysed reaction is D-glyceraldehyde 3-phosphate + pyruvate + H(+) = 1-deoxy-D-xylulose 5-phosphate + CO2. Its pathway is metabolic intermediate biosynthesis; 1-deoxy-D-xylulose 5-phosphate biosynthesis; 1-deoxy-D-xylulose 5-phosphate from D-glyceraldehyde 3-phosphate and pyruvate: step 1/1. Catalyzes the acyloin condensation reaction between C atoms 2 and 3 of pyruvate and glyceraldehyde 3-phosphate to yield 1-deoxy-D-xylulose-5-phosphate (DXP). The sequence is that of 1-deoxy-D-xylulose-5-phosphate synthase from Salmonella choleraesuis (strain SC-B67).